The sequence spans 491 residues: Protein nucleotidyltransferase YdiU (491 aa).

Positions 94, 96, 97, 117, 129, 130, 180, and 187 each coordinate ATP. Catalysis depends on aspartate 256, which acts as the Proton acceptor. Mg(2+) is bound by residues asparagine 257 and aspartate 266. ATP is bound at residue aspartate 266.

It belongs to the SELO family. It depends on Mg(2+) as a cofactor. Mn(2+) is required as a cofactor.

It catalyses the reaction L-seryl-[protein] + ATP = 3-O-(5'-adenylyl)-L-seryl-[protein] + diphosphate. It carries out the reaction L-threonyl-[protein] + ATP = 3-O-(5'-adenylyl)-L-threonyl-[protein] + diphosphate. The enzyme catalyses L-tyrosyl-[protein] + ATP = O-(5'-adenylyl)-L-tyrosyl-[protein] + diphosphate. The catalysed reaction is L-histidyl-[protein] + UTP = N(tele)-(5'-uridylyl)-L-histidyl-[protein] + diphosphate. It catalyses the reaction L-seryl-[protein] + UTP = O-(5'-uridylyl)-L-seryl-[protein] + diphosphate. It carries out the reaction L-tyrosyl-[protein] + UTP = O-(5'-uridylyl)-L-tyrosyl-[protein] + diphosphate. Its function is as follows. Nucleotidyltransferase involved in the post-translational modification of proteins. It can catalyze the addition of adenosine monophosphate (AMP) or uridine monophosphate (UMP) to a protein, resulting in modifications known as AMPylation and UMPylation. In Clostridium botulinum (strain Alaska E43 / Type E3), this protein is Protein nucleotidyltransferase YdiU.